The following is a 202-amino-acid chain: Holliday junction branch migration complex subunit RuvA (202 aa).

A domain I region spans residues 1 to 64 (MIGRLRGTLA…EDAQLLYGFA (64 aa)). Positions 65 to 143 (GKRERDFFRE…AWETSPAMFA (79 aa)) are domain II. Residues 144-154 (LVPNQPDGPAP) form a flexible linker region. The segment at 154–202 (PVNTAENDAVSALISLGYKPQEASKAISAIKEKGLSSEDMIRRALKGMI) is domain III.

Belongs to the RuvA family. Homotetramer. Forms an RuvA(8)-RuvB(12)-Holliday junction (HJ) complex. HJ DNA is sandwiched between 2 RuvA tetramers; dsDNA enters through RuvA and exits via RuvB. An RuvB hexamer assembles on each DNA strand where it exits the tetramer. Each RuvB hexamer is contacted by two RuvA subunits (via domain III) on 2 adjacent RuvB subunits; this complex drives branch migration. In the full resolvosome a probable DNA-RuvA(4)-RuvB(12)-RuvC(2) complex forms which resolves the HJ.

Its subcellular location is the cytoplasm. Its function is as follows. The RuvA-RuvB-RuvC complex processes Holliday junction (HJ) DNA during genetic recombination and DNA repair, while the RuvA-RuvB complex plays an important role in the rescue of blocked DNA replication forks via replication fork reversal (RFR). RuvA specifically binds to HJ cruciform DNA, conferring on it an open structure. The RuvB hexamer acts as an ATP-dependent pump, pulling dsDNA into and through the RuvAB complex. HJ branch migration allows RuvC to scan DNA until it finds its consensus sequence, where it cleaves and resolves the cruciform DNA. The chain is Holliday junction branch migration complex subunit RuvA from Pseudomonas fluorescens (strain Pf0-1).